Here is a 473-residue protein sequence, read N- to C-terminus: GTPase Der (473 aa).

EngA-type G domains follow at residues 3–167 (FTVA…GKDR) and 203–378 (LRVA…RVWN). Residues 9–16 (GRPNVGKS), 56–60 (DTAGL), 119–122 (NKSE), 209–216 (GRPNAGKS), 256–260 (DTAGM), and 321–324 (NKWD) each bind GTP. The region spanning 379-463 (KRISTARLNR…PIRIHFRSPD (85 aa)) is the KH-like domain.

The protein belongs to the TRAFAC class TrmE-Era-EngA-EngB-Septin-like GTPase superfamily. EngA (Der) GTPase family. As to quaternary structure, associates with the 50S ribosomal subunit.

In terms of biological role, GTPase that plays an essential role in the late steps of ribosome biogenesis. The polypeptide is GTPase Der (Rhizobium etli (strain ATCC 51251 / DSM 11541 / JCM 21823 / NBRC 15573 / CFN 42)).